Reading from the N-terminus, the 20-residue chain is Implantin (20 aa).

It belongs to the EF-1-beta/EF-1-delta family. Post-translationally, phosphorylated. As to expression, uterus and embryo.

The protein resides in the cytoplasm. The protein localises to the nucleus. Binds DNA. The sequence is that of Implantin from Mus musculus (Mouse).